The sequence spans 135 residues: Envelope glycoprotein N (135 aa).

Positions 1-19 are cleaved as a signal peptide; it reads MEWNTLVLGLLVLSVVASS. Residues 20 to 98 are Virion surface-facing; it reads NNTSTASTPR…SHMYELSLSS (79 aa). Positions 21–68 are enriched in low complexity; it reads NTSTASTPRPSSSTHASTTVKATTVATTSTTTATSTSSTTSAKPGSTT. The tract at residues 21–73 is disordered; the sequence is NTSTASTPRPSSSTHASTTVKATTVATTSTTTATSTSSTTSAKPGSTTHDPNV. The helical transmembrane segment at 99–119 threads the bilayer; it reads FAAWWTMLNALILMGAFCIVL. Over 120–135 the chain is Intravirion; the sequence is RHCCFQNFTATTTKGY.

It belongs to the herpesviridae glycoprotein N family. As to quaternary structure, interacts (via N-terminus) with gM (via N-terminus). The gM-gN heterodimer forms the gCII complex. O-glycosylated.

The protein resides in the virion membrane. The protein localises to the host membrane. It is found in the host Golgi apparatus. Its subcellular location is the host trans-Golgi network. Functionally, envelope glycoprotein necessary for proper maturation of gM and modulation of its membrane fusion activity. Also plays a critical role in virion morphogenesis. This Homo sapiens (Human) protein is Envelope glycoprotein N.